Consider the following 191-residue polypeptide: Protein GrpE (191 aa).

The disordered stretch occupies residues 1 to 49 (MSEEKQTAEQVEAAEQEEVTEQAEQAASQEQHEETAGQEEALQHQIDEL). Positions 12-21 (EAAEQEEVTE) are enriched in acidic residues. The segment covering 30 to 49 (EQHEETAGQEEALQHQIDEL) has biased composition (basic and acidic residues).

Belongs to the GrpE family. As to quaternary structure, homodimer.

It is found in the cytoplasm. In terms of biological role, participates actively in the response to hyperosmotic and heat shock by preventing the aggregation of stress-denatured proteins, in association with DnaK and GrpE. It is the nucleotide exchange factor for DnaK and may function as a thermosensor. Unfolded proteins bind initially to DnaJ; upon interaction with the DnaJ-bound protein, DnaK hydrolyzes its bound ATP, resulting in the formation of a stable complex. GrpE releases ADP from DnaK; ATP binding to DnaK triggers the release of the substrate protein, thus completing the reaction cycle. Several rounds of ATP-dependent interactions between DnaJ, DnaK and GrpE are required for fully efficient folding. This Bacillus velezensis (strain DSM 23117 / BGSC 10A6 / LMG 26770 / FZB42) (Bacillus amyloliquefaciens subsp. plantarum) protein is Protein GrpE.